A 143-amino-acid polypeptide reads, in one-letter code: Transcriptional regulator MraZ (143 aa).

2 consecutive SpoVT-AbrB domains span residues 5–47 and 76–119; these read EFEH…PLSE and AVQC…NKAR.

The protein belongs to the MraZ family. Forms oligomers.

It localises to the cytoplasm. The protein localises to the nucleoid. This is Transcriptional regulator MraZ from Pediococcus pentosaceus (strain ATCC 25745 / CCUG 21536 / LMG 10740 / 183-1w).